We begin with the raw amino-acid sequence, 111 residues long: Cell cycle protein GpsB (111 aa).

A coiled-coil region spans residues 34–72; it reads LDMIIKDYEVFHKELEQLQQQNARLKRELEEQKLAAAQA.

This sequence belongs to the GpsB family. In terms of assembly, forms polymers through the coiled coil domains. Interacts with PBP1, MreC and EzrA.

The protein resides in the cytoplasm. Divisome component that associates with the complex late in its assembly, after the Z-ring is formed, and is dependent on DivIC and PBP2B for its recruitment to the divisome. Together with EzrA, is a key component of the system that regulates PBP1 localization during cell cycle progression. Its main role could be the removal of PBP1 from the cell pole after pole maturation is completed. Also contributes to the recruitment of PBP1 to the division complex. Not essential for septum formation. This chain is Cell cycle protein GpsB, found in Bacillus cytotoxicus (strain DSM 22905 / CIP 110041 / 391-98 / NVH 391-98).